A 776-amino-acid polypeptide reads, in one-letter code: MAEPRQEFEVMEDHAGTYGLGDRKDQGGYTMLQDQEGDTDAGLKESPLQTPTEDGSEEPGSETSDAKSTPTAEDVTAPLVDEGAPGEQAAAQPHTEIPEGTTAEEAGIGDTPSLEDEAAGHVTQEPESGKVVQEGFLREPGPPGLSHQLMSGMPGAPLLPEGPREATRQPSGTGPEDTEGGRHAPELLKHQLLGDLHQEGPPLKGAGGKERPGSKEEVDEDRDVDESSPQDSPPSKASPAQDGRPPQTAAREATSIPGFPAKGAIHLPVDFLSKVSTEIPASEPDGPSAGRAKGQDAPLEFTFHVEITPNVQKEQAHSEEHLGRAAFPGAPGEGPEARGPSLGEDTKEADLPESSEKQPAAAPRGKPVSRVPQLKARMVSKSKDGTGSDDKKAKTSTRSSAKTLKNRPCLSPKHPTPGSSDPLIQPSSPAVCPEPPSSPKYVSSVTPRTGSSGAKEMKLKGADGKTKIATPRGAAPPGQKGQANATRIPAKTPPAPKTPPSSATKQVQRRPPPAGPRSERGEPPKSGDRSGYSSPGSPGTPGSRSRTPSLPTPPTREPKKVAVVRTPPKSPSSAKSRLQTAPVPMPDLKNVKSKIGSTENLKHQPGGGKVQIINKKLDLSNVQSKCGSKDNIKHVPGGGSVQIVYKPVDLSKVTSKCGSLGNIHHKPGGGQVEVKSEKLDFKDRVQSKIGSLDNITHVPGGGNKKIETHKLTFRENAKAKTDHGAEIVYKSPVVSGDTSPRHLSNVSSTGSIDMVDSPQLATLADEVSASLAKQGL.

Basic and acidic residues predominate over residues 1-26; it reads MAEPRQEFEVMEDHAGTYGLGDRKDQ. Disordered stretches follow at residues 1–263 and 276–591; these read MAEP…PAKG and STEI…LKNV. A2 is modified (N-acetylalanine). A phosphotyrosine mark is found at Y18 and Y29. K44 participates in a covalent cross-link: Glycyl lysine isopeptide (Lys-Gly) (interchain with G-Cter in ubiquitin). Phosphoserine occurs at positions 46 and 61. The segment covering 61–71 has biased composition (polar residues); that stretch reads SETSDAKSTPT. Phosphothreonine occurs at positions 69, 71, and 111. Basic and acidic residues-rich tracts occupy residues 179 to 189 and 207 to 216; these read EGGRHAPELLK and GGKERPGSKE. S214 carries the post-translational modification Phosphoserine. The span at 217–228 shows a compositional bias: acidic residues; sequence EVDEDRDVDESS. Residues 314 to 323 are compositionally biased toward basic and acidic residues; sequence EQAHSEEHLG. Low complexity predominate over residues 324-340; the sequence is RAAFPGAPGEGPEARGP. Composition is skewed to basic and acidic residues over residues 344–356 and 381–393; these read EDTK…ESSE and KSKD…DKKA. The segment covering 440–452 has biased composition (polar residues); sequence KYVSSVTPRTGSS. Residues 455-466 show a composition bias toward basic and acidic residues; the sequence is KEMKLKGADGKT. T470 bears the Phosphothreonine mark. The residue at position 472 (R472) is an Omega-N-methylarginine. At K480 the chain carries N6,N6-dimethyllysine; alternate. The residue at position 480 (K480) is an N6-acetyllysine; alternate. Phosphothreonine occurs at positions 486, 492, and 498. A phosphoserine mark is found at S502, S526, and S530. A compositionally biased stretch (basic and acidic residues) spans 517-528; it reads RSERGEPPKSGD. The span at 529-549 shows a compositional bias: low complexity; that stretch reads RSGYSSPGSPGTPGSRSRTPS. Y532 carries the phosphotyrosine modification. 3 positions are modified to phosphoserine: S533, S534, and S537. Phosphothreonine is present on residues T540 and T547. S549 is modified (phosphoserine). A Phosphothreonine modification is found at T552. K560 carries the post-translational modification N6-acetyllysine. T566 bears the Phosphothreonine mark. Residues S570 and S572 each carry the phosphoserine modification. Tau/MAP repeat units follow at residues 579-609, 610-640, 641-671, and 672-703; these read QTAP…GGGK, VQII…GGGS, VQIV…GGGQ, and VEVK…GGGN. A Glycyl lysine isopeptide (Lys-Gly) (interchain with G-Cter in ubiquitin) cross-link involves residue K589. Position 594 is an N6-acetyllysine; alternate (K594). N6-methyllysine; alternate is present on K594. K594 is covalently cross-linked (Glycyl lysine isopeptide (Lys-Gly) (interchain with G-Cter in ubiquitin); alternate). S597 is subject to Phosphoserine. A Glycyl lysine isopeptide (Lys-Gly) (interchain with G-Cter in ubiquitin) cross-link involves residue K602. The residue at position 616 (K616) is an N6-acetyllysine; alternate. K616 is covalently cross-linked (Glycyl lysine isopeptide (Lys-Gly) (interchain with G-Cter in ubiquitin); alternate). Phosphoserine occurs at positions 620 and 624. K625 carries the post-translational modification N6-acetyllysine. Position 628 is a phosphoserine (S628). The residue at position 633 (K633) is an N6-acetyllysine; alternate. K633 is covalently cross-linked (Glycyl lysine isopeptide (Lys-Gly) (interchain with G-Cter in ubiquitin); alternate). At S640 the chain carries Phosphoserine. K646 bears the N6,N6-dimethyllysine; alternate mark. K646, K652, and K656 each carry N6-acetyllysine; alternate. Residues K646, K652, and K656 each participate in a glycyl lysine isopeptide (Lys-Gly) (interchain with G-Cter in ubiquitin); alternate cross-link. S659 is modified (phosphoserine). N6-acetyllysine; alternate is present on residues K666, K678, and K682. Residues K666, K678, and K682 each participate in a glycyl lysine isopeptide (Lys-Gly) (interchain with G-Cter in ubiquitin); alternate cross-link. An Omega-N-methylarginine modification is found at R684. Residue S687 is modified to Phosphoserine. Residue K688 forms a Glycyl lysine isopeptide (Lys-Gly) (interchain with G-Cter in ubiquitin) linkage. S691 carries the post-translational modification Phosphoserine. K704 is modified (N6-acetyllysine; alternate). A Glycyl lysine isopeptide (Lys-Gly) (interchain with G-Cter in ubiquitin); alternate cross-link involves residue K704. K710 participates in a covalent cross-link: Glycyl lysine isopeptide (Lys-Gly) (interchain with G-Cter in ubiquitin). Residue K720 is modified to N6-acetyllysine; alternate. K720 participates in a covalent cross-link: Glycyl lysine isopeptide (Lys-Gly) (interchain with G-Cter in ubiquitin); alternate. A Phosphotyrosine modification is found at Y729. Phosphoserine is present on residues S731 and S735. Residues 733–752 are disordered; the sequence is VVSGDTSPRHLSNVSSTGSI. Over residues 736-751 the composition is skewed to polar residues; that stretch reads GDTSPRHLSNVSSTGS. Phosphothreonine is present on T738. A phosphoserine mark is found at S739, S744, S751, and S757. T762 carries the post-translational modification Phosphothreonine.

In terms of assembly, interacts with MARK1, MARK2, MARK3 and MARK4. Interacts with SQSTM1 when polyubiquitinated. Interacts with PSMC2 through SQSTM1. Interacts with FKBP4. Binds to CSNK1D. Interacts with SGK1. Interacts with EPM2A; the interaction dephosphorylates MAPT at Ser-396. Interacts with PIN1. Interacts with LRRK2. Interacts with LRP1, leading to endocytosis; this interaction is reduced in the presence of LRPAP1/RAP. Post-translationally, polyubiquitinated. Requires functional TRAF6 and may provoke SQSTM1-dependent degradation by the proteasome. Phosphorylation at various serine and threonine residues in S-P or T-P motifs by proline-directed protein kinases (PDPK1, CDK1, CDK5, GSK3, MAPK) (a few sites per protein in interphase, more in mitosis), and at serine residues in K-X-G-S motifs by MAP/microtubule affinity-regulating kinase (MARK1, MARK2, MARK3 or MARK4), causing detachment from microtubules, and their disassembly. Phosphorylation at Ser-597 by BRSK1 and BRSK2 in neurons affects ability to bind microtubules and plays a role in neuron polarization. Phosphorylation at Ser-214 by SGK1 mediates microtubule depolymerization and neurite formation in hippocampal neurons. Phosphorylated by PHK. Dephosphorylation at several serine and threonine residues by the serine/threonine phosphatase PPP5C.

It is found in the cytoplasm. The protein localises to the cytosol. The protein resides in the cell membrane. It localises to the cytoskeleton. Its subcellular location is the cell projection. It is found in the axon. The protein localises to the dendrite. In terms of biological role, promotes microtubule assembly and stability, and might be involved in the establishment and maintenance of neuronal polarity. The C-terminus binds axonal microtubules while the N-terminus binds neural plasma membrane components, suggesting that tau functions as a linker protein between both. Axonal polarity is predetermined by tau localization (in the neuronal cell) in the domain of the cell body defined by the centrosome. The short isoforms allow plasticity of the cytoskeleton whereas the longer isoforms may preferentially play a role in its stabilization. This Gorilla gorilla gorilla (Western lowland gorilla) protein is Microtubule-associated protein tau (MAPT).